Here is a 228-residue protein sequence, read N- to C-terminus: CD9 antigen (228 aa).

The Cytoplasmic portion of the chain corresponds to 2-12; that stretch reads PVKGGTKCIKY. Residue C9 is the site of S-palmitoyl cysteine attachment. Residues 13-33 traverse the membrane as a helical segment; sequence LLFGFNFIFWLAGIAVLAIGL. The Extracellular portion of the chain corresponds to 34–55; the sequence is WLRFDSQTKSIFEQETNNNNSS. N-linked (GlcNAc...) asparagine glycans are attached at residues N52 and N53. Residues 56 to 76 traverse the membrane as a helical segment; the sequence is FYTGVYILIGAGALMMLVGFL. Residues 77–87 lie on the Cytoplasmic side of the membrane; sequence GCCGAVQESQC. Residues C78, C79, and C87 are each lipidated (S-palmitoyl cysteine). A helical transmembrane segment spans residues 88–111; sequence MLGLFFGFLLVIFAIEIAAAIWGY. Topologically, residues 112–195 are extracellular; it reads SHKDEVIKEV…KEVFDNKFHI (84 aa). 2 disulfide bridges follow: C152-C181 and C153-C167. Residues 196 to 221 form a helical membrane-spanning segment; sequence IGAVGIGIAVVMIFGMIFSMILCCAI. S-palmitoyl cysteine attachment occurs at residues C218 and C219. Topologically, residues 222–228 are cytoplasmic; sequence RRNREMV.

The protein belongs to the tetraspanin (TM4SF) family. As to quaternary structure, forms both disulfide-linked homodimers and higher homooligomers as well as heterooligomers with other members of the tetraspanin family. Interacts (via the second extracellular domain) with integrin ITGAV:ITGB3. Interacts with integrin ITGA6:ITGB1; interaction takes place in oocytes and is involved in sperm-egg fusion. Part of integrin-tetraspanin complexes composed of CD81, beta-1 and beta-2 integrins in the membrane of monocyte/macrophages. Interacts with CD63; identified in a complex with CD63 and ITGB3. Associates with CR2/CD21 and with PTGFRN/CD9P1. Part of a complex composed of CD9, CD81, PTGFRN and IGSF8. Interacts directly with IGSF8. Interacts with PDPN; this interaction is homophilic and attenuates platelet aggregation and pulmonary metastasis induced by PDPN. Interacts (on T cell side) with CD81 at immunological synapses between antigen-presenting cells and T cells. Post-translationally, palmitoylated at a low, basal level in unstimulated platelets. The level of palmitoylation increases when platelets are activated by thrombin (in vitro). The protein exists in three forms with molecular masses between 22 and 27 kDa, and is known to carry covalently linked fatty acids. Palmitoylation by ZDHHC2 regulates CD9 expression, association with other tetraspanin family proteins and function in cell adhesion. Detected in platelets (at protein level). Expressed by a variety of hematopoietic and epithelial cells.

It is found in the cell membrane. The protein resides in the membrane. The protein localises to the secreted. It localises to the extracellular exosome. Its function is as follows. Integral membrane protein associated with integrins, which regulates different processes, such as sperm-egg fusion, platelet activation and aggregation, and cell adhesion. Present at the cell surface of oocytes and plays a key role in sperm-egg fusion, possibly by organizing multiprotein complexes and the morphology of the membrane required for the fusion. In myoblasts, associates with CD81 and PTGFRN and inhibits myotube fusion during muscle regeneration. In macrophages, associates with CD81 and beta-1 and beta-2 integrins, and prevents macrophage fusion into multinucleated giant cells specialized in ingesting complement-opsonized large particles. Also prevents the fusion between mononuclear cell progenitors into osteoclasts in charge of bone resorption. Acts as a receptor for PSG17. Involved in platelet activation and aggregation. Regulates paranodal junction formation. Involved in cell adhesion, cell motility and tumor metastasis. In Homo sapiens (Human), this protein is CD9 antigen.